The primary structure comprises 409 residues: Potassium channel subfamily K member 3 (409 aa).

Residues 1–8 (MKRQNVRT) are Cytoplasmic-facing. Residues 9–29 (LALIVCTFTYLLVGAAVFDAL) form a helical membrane-spanning segment. A glycan (N-linked (GlcNAc...) asparagine) is linked at Asn53. Positions 78–101 (WRFAGSFYFAITVITTIGYGHAAP) form an intramembrane region, pore-forming. A helical membrane pass occupies residues 108-128 (VFCMFYALLGIPLTLVMFQSL). The Cytoplasmic portion of the chain corresponds to 129 to 158 (GERINTFVRYLLHRAKRGLGMRHAEVSMAN). A helical membrane pass occupies residues 159-179 (MVLIGFVSCISTLCIGAAAFS). An intramembrane region (pore-forming) is located at residues 184-207 (WTFFQAYYYCFITLTTIGFGDYVA). The helical transmembrane segment at 223-243 (FSFVYILTGLTVIGAFLNLVV) threads the bilayer. The Cytoplasmic portion of the chain corresponds to 244-409 (LRFMTMNAED…RGLMKRRSSV (166 aa)).

It belongs to the two pore domain potassium channel (TC 1.A.1.8) family. In terms of assembly, homodimer. Heterodimer with KCNK1. Heterodimer with KCNK9. As to expression, very strong expression in heart, also detected in kidney, brain, skin, testis, lung, skeletal muscle, small intestine and stomach. Not detected in liver, thymus or spleen. Expressed in adrenal glands mainly in zona glomerulosa and zona fasciculata of the cortex. Expressed at higher levels in brown and beige than in white adipocytes.

Its subcellular location is the cell membrane. It catalyses the reaction K(+)(in) = K(+)(out). The catalysed reaction is Na(+)(in) = Na(+)(out). Its activity is regulated as follows. Activated by halothane and isoflurane. Inhibited by external acidification, diacylglycerol and anandamide. Inactivated by barium. In terms of biological role, k(+) channel that conducts voltage-dependent outward rectifying currents upon membrane depolarization. Voltage sensing is coupled to K(+) electrochemical gradient in an 'ion flux gating' mode where outward but not inward ion flow opens the gate. Changes ion selectivity and becomes permeable to Na(+) ions in response to extracellular acidification. Protonation of the pH sensor His-98 stabilizes C-type inactivation conformation likely converting the channel from outward K(+)-conducting, to inward Na(+)-conducting to nonconductive state. Homo- and heterodimerizes to form functional channels with distinct regulatory and gating properties. Allows K(+) currents with fast-gating kinetics important for the repolarization and hyperpolarization phases of action potentials. In cerebellar granule cells, heteromeric KCNK3:KCNK9 channel may hyperpolarize the resting membrane potential to limit intrinsic neuronal excitability, but once the action potential threshold is reached, it may support high-frequency action potential firing and increased neuronal excitability. Dispensable for central chemosensory respiration i.e. breathing controlled by brainstem CO2/pH, it rather conducts pH-sensitive currents and controls the firing rate of serotonergic raphe neurons involved in potentiation of the respiratory chemoreflex. Additionally, imparts chemosensitivity to type 1 cells in carotid bodies which respond to a decrease in arterial oxygen pressure or an increase in carbon dioxide pressure or pH to initiate adaptive changes in pulmonary ventilation. In adrenal gland, contributes to the maintenance of a hyperpolarized resting membrane potential of aldosterone-producing cells at zona glomerulosa and limits aldosterone release as part of a regulatory mechanism that controls arterial blood pressure and electrolyte homeostasis. In brown adipocytes, mediates K(+) efflux that counteracts norepinephrine-induced membrane depolarization, limits Ca(2+) efflux and downstream cAMP and PKA signaling, ultimately attenuating lipid oxidation and adaptive thermogenesis. In Mus musculus (Mouse), this protein is Potassium channel subfamily K member 3.